The chain runs to 353 residues: S-adenosylmethionine:tRNA ribosyltransferase-isomerase (353 aa).

The protein belongs to the QueA family. Monomer.

Its subcellular location is the cytoplasm. It catalyses the reaction 7-aminomethyl-7-carbaguanosine(34) in tRNA + S-adenosyl-L-methionine = epoxyqueuosine(34) in tRNA + adenine + L-methionine + 2 H(+). Its pathway is tRNA modification; tRNA-queuosine biosynthesis. Functionally, transfers and isomerizes the ribose moiety from AdoMet to the 7-aminomethyl group of 7-deazaguanine (preQ1-tRNA) to give epoxyqueuosine (oQ-tRNA). The polypeptide is S-adenosylmethionine:tRNA ribosyltransferase-isomerase (Nitrosomonas europaea (strain ATCC 19718 / CIP 103999 / KCTC 2705 / NBRC 14298)).